A 56-amino-acid chain; its full sequence is Keratin-associated protein 20-1 (56 aa).

Belongs to the KRTAP type 20 family. As to quaternary structure, interacts with hair keratins.

Its function is as follows. In the hair cortex, hair keratin intermediate filaments are embedded in an interfilamentous matrix, consisting of hair keratin-associated proteins (KRTAP), which are essential for the formation of a rigid and resistant hair shaft through their extensive disulfide bond cross-linking with abundant cysteine residues of hair keratins. The matrix proteins include the high-sulfur and high-glycine-tyrosine keratins. The polypeptide is Keratin-associated protein 20-1 (KRTAP20-1) (Homo sapiens (Human)).